A 512-amino-acid polypeptide reads, in one-letter code: Protein maph-9 (512 aa).

3 disordered regions span residues 24–103, 168–386, and 481–512; these read ISRK…DDDF, DLSE…KNEK, and GNRL…RPFR. Low complexity-rich tracts occupy residues 30–39 and 78–95; these read TTTTSSGSSG and STLS…STAA. Basic and acidic residues predominate over residues 178–200; that stretch reads TDHEDPSLTFRVDKELEQSESKK. Residues 230-239 are compositionally biased toward polar residues; the sequence is PQTSANLSTK. Composition is skewed to basic and acidic residues over residues 260 to 302 and 310 to 386; these read KPSD…RENS and VQDH…KNEK. A coiled-coil region spans residues 267–429; that stretch reads KEWLQKKERE…QLEESEKMTR (163 aa). A compositionally biased stretch (polar residues) spans 502–512; the sequence is PGTTTSLRPFR.

In terms of tissue distribution, expressed in amphid and phasmid ciliated neurons.

It is found in the cell projection. The protein localises to the cilium. It localises to the cytoplasm. Its subcellular location is the cytoskeleton. The protein resides in the cilium axoneme. This Caenorhabditis elegans protein is Protein maph-9.